The chain runs to 190 residues: A-type ATP synthase subunit E (190 aa).

The protein belongs to the V-ATPase E subunit family. As to quaternary structure, has multiple subunits with at least A(3), B(3), C, D, E, F, H, I and proteolipid K(x).

The protein resides in the cell membrane. Functionally, component of the A-type ATP synthase that produces ATP from ADP in the presence of a proton gradient across the membrane. In Pyrobaculum islandicum (strain DSM 4184 / JCM 9189 / GEO3), this protein is A-type ATP synthase subunit E.